The chain runs to 990 residues: Kinesin-related protein 5 (990 aa).

Residues 6-330 (NIRVMCRFRP…LKFGARAKSI (325 aa)) form the Kinesin motor domain. 83–90 (GQTGSGKT) contacts ATP. Disordered regions lie at residues 401-485 (QSNS…SSID) and 732-788 (FSSS…QDQQ). Over residues 406 to 418 (SGGGGSGSSGGSS) the composition is skewed to gly residues. Low complexity-rich tracts occupy residues 466-485 (TSSI…SSID) and 733-781 (SSSN…PSSN). Positions 513 to 948 (IEMEKMKEDT…DQLISTQRLI (436 aa)) form a coiled coil.

The protein belongs to the TRAFAC class myosin-kinesin ATPase superfamily. Kinesin family. Kinesin subfamily. In terms of assembly, interacts with actin.

The protein localises to the cytoplasm. The protein resides in the cytoskeleton. Microtubule-associated force-producing protein that plays a role in organelle transport. Its motor activity is directed toward the microtubule's plus end. May connect microtubules to actin filaments. Associates with actin-based structures in cells and is likely involved in the organization of actin cytoskeletons in such structures. The sequence is that of Kinesin-related protein 5 (kif5) from Dictyostelium discoideum (Social amoeba).